The chain runs to 545 residues: CTP synthase (545 aa).

The tract at residues M1–L266 is amidoligase domain. A CTP-binding site is contributed by S14. S14 provides a ligand contact to UTP. ATP is bound by residues S15–I20 and D72. D72 and E140 together coordinate Mg(2+). CTP is bound by residues D147–E149, K187–Q192, and K223. Residues K187–Q192 and K223 contribute to the UTP site. R239 to V241 contacts ATP. Residues T291–E542 enclose the Glutamine amidotransferase type-1 domain. Residue G352 participates in L-glutamine binding. C379 functions as the Nucleophile; for glutamine hydrolysis in the catalytic mechanism. L-glutamine is bound by residues L380–Q383, E403, and R470. Residues H515 and E517 contribute to the active site.

It belongs to the CTP synthase family. As to quaternary structure, homotetramer.

The enzyme catalyses UTP + L-glutamine + ATP + H2O = CTP + L-glutamate + ADP + phosphate + 2 H(+). It carries out the reaction L-glutamine + H2O = L-glutamate + NH4(+). It catalyses the reaction UTP + NH4(+) + ATP = CTP + ADP + phosphate + 2 H(+). It functions in the pathway pyrimidine metabolism; CTP biosynthesis via de novo pathway; CTP from UDP: step 2/2. Its activity is regulated as follows. Allosterically activated by GTP, when glutamine is the substrate; GTP has no effect on the reaction when ammonia is the substrate. The allosteric effector GTP functions by stabilizing the protein conformation that binds the tetrahedral intermediate(s) formed during glutamine hydrolysis. Inhibited by the product CTP, via allosteric rather than competitive inhibition. Catalyzes the ATP-dependent amination of UTP to CTP with either L-glutamine or ammonia as the source of nitrogen. Regulates intracellular CTP levels through interactions with the four ribonucleotide triphosphates. This is CTP synthase from Idiomarina loihiensis (strain ATCC BAA-735 / DSM 15497 / L2-TR).